A 154-amino-acid chain; its full sequence is MTQEMPFDVTRARRAGARLAAVQALYEMEQTEKSARATIREFMEDRLGLGPDGTPVEDADPDLFKSIVNSVVEHQAKIDTAILARLAEGWKLTRLDATMRALLRAGAAEFIAHQELSDAIILSEYVSLAHDFFDEGDAKFANAVLQNMGRDLRA.

It belongs to the NusB family.

Involved in transcription antitermination. Required for transcription of ribosomal RNA (rRNA) genes. Binds specifically to the boxA antiterminator sequence of the ribosomal RNA (rrn) operons. This is Transcription antitermination protein NusB from Hyphomonas neptunium (strain ATCC 15444).